An 860-amino-acid chain; its full sequence is Leucine--tRNA ligase (860 aa).

The 'HIGH' region motif lies at 42–52 (PYPSGRLHMGH). The short motif at 619-623 (KMSKS) is the 'KMSKS' region element. Lys-622 is a binding site for ATP.

It belongs to the class-I aminoacyl-tRNA synthetase family.

The protein localises to the cytoplasm. The enzyme catalyses tRNA(Leu) + L-leucine + ATP = L-leucyl-tRNA(Leu) + AMP + diphosphate. This is Leucine--tRNA ligase from Escherichia coli O6:K15:H31 (strain 536 / UPEC).